The chain runs to 175 residues: Myosin regulatory light chain 2, atrial isoform (175 aa).

Residue Ala-2 is modified to N-acetylalanine. Ser-22 and Ser-23 each carry phosphoserine. 3 consecutive EF-hand domains span residues 32–67 (AQIQ…LGKV), 102–137 (DPEE…QADK), and 138–173 (FSPA…GDEK). Ca(2+) is bound by residues Asp-45, Asn-47, Asp-49, and Asp-56.

Myosin is a hexamer of 2 heavy chains and 4 light chains.

This chain is Myosin regulatory light chain 2, atrial isoform (MYL7), found in Sus scrofa (Pig).